The sequence spans 320 residues: Transcription factor bHLH96 (320 aa).

Residues glutamate 30–glutamate 121 are disordered. The span at tyrosine 65 to leucine 76 shows a compositional bias: acidic residues. The segment covering glycine 104 to serine 114 has biased composition (basic residues). Residues asparagine 122 to leucine 173 enclose the bHLH domain. The interval valine 184–serine 206 is disordered. Residues serine 244–serine 320 enclose the ACT domain.

In terms of assembly, homodimer. Expressed constitutively in roots, leaves, stems, and flowers.

Its subcellular location is the nucleus. This Arabidopsis thaliana (Mouse-ear cress) protein is Transcription factor bHLH96 (BHLH96).